Here is a 500-residue protein sequence, read N- to C-terminus: Lysine--tRNA ligase (500 aa).

Residues glutamate 410 and glutamate 417 each coordinate Mg(2+).

Belongs to the class-II aminoacyl-tRNA synthetase family. Homodimer. Mg(2+) serves as cofactor.

Its subcellular location is the cytoplasm. The enzyme catalyses tRNA(Lys) + L-lysine + ATP = L-lysyl-tRNA(Lys) + AMP + diphosphate. The sequence is that of Lysine--tRNA ligase from Shewanella amazonensis (strain ATCC BAA-1098 / SB2B).